A 179-amino-acid polypeptide reads, in one-letter code: Ubiquinol-cytochrome c reductase iron-sulfur subunit (179 aa).

A helical membrane pass occupies residues 14-35; the sequence is FLYVATAAVGAAGVAAVAWPFI. Positions 80-173 constitute a Rieske domain; it reads AKEIQSEEAA…YEFVDNTKIR (94 aa). [2Fe-2S] cluster is bound by residues Cys118, His120, Cys137, and His140. Cys123 and Cys139 are joined by a disulfide.

Belongs to the Rieske iron-sulfur protein family. As to quaternary structure, the main subunits of complex b-c1 are: cytochrome b, cytochrome c1 and the Rieske protein. Requires [2Fe-2S] cluster as cofactor.

It is found in the cell membrane. The catalysed reaction is a quinol + 2 Fe(III)-[cytochrome c](out) = a quinone + 2 Fe(II)-[cytochrome c](out) + 2 H(+)(out). Functionally, component of the ubiquinol-cytochrome c reductase complex (complex III or cytochrome b-c1 complex), which is a respiratory chain that generates an electrochemical potential coupled to ATP synthesis. The sequence is that of Ubiquinol-cytochrome c reductase iron-sulfur subunit (petA) from Blastochloris viridis (Rhodopseudomonas viridis).